A 292-amino-acid chain; its full sequence is Shikimate dehydrogenase (NADP(+)) (292 aa).

Shikimate-binding positions include 25-27 (SKS) and Thr-72. The active-site Proton acceptor is the Lys-76. Residues Asn-97 and Asp-113 each coordinate shikimate. Residues 137-141 (GAGGA), 161-166 (NRTQSK), and Met-230 each bind NADP(+). Tyr-232 contributes to the shikimate binding site. Gly-254 is an NADP(+) binding site.

The protein belongs to the shikimate dehydrogenase family. Homodimer.

The enzyme catalyses shikimate + NADP(+) = 3-dehydroshikimate + NADPH + H(+). The protein operates within metabolic intermediate biosynthesis; chorismate biosynthesis; chorismate from D-erythrose 4-phosphate and phosphoenolpyruvate: step 4/7. Involved in the biosynthesis of the chorismate, which leads to the biosynthesis of aromatic amino acids. Catalyzes the reversible NADPH linked reduction of 3-dehydroshikimate (DHSA) to yield shikimate (SA). The protein is Shikimate dehydrogenase (NADP(+)) of Shewanella sp. (strain ANA-3).